A 233-amino-acid chain; its full sequence is Small ribosomal subunit protein uS5 (233 aa).

The span at methionine 1–serine 13 shows a compositional bias: polar residues. The tract at residues methionine 1–asparagine 40 is disordered. Basic and acidic residues predominate over residues asparagine 15–asparagine 40. Residues leucine 45–valine 108 enclose the S5 DRBM domain.

It belongs to the universal ribosomal protein uS5 family. Part of the 30S ribosomal subunit. Contacts proteins S4 and S8.

Functionally, with S4 and S12 plays an important role in translational accuracy. In terms of biological role, located at the back of the 30S subunit body where it stabilizes the conformation of the head with respect to the body. The protein is Small ribosomal subunit protein uS5 of Bifidobacterium longum (strain NCC 2705).